The chain runs to 281 residues: 2-dehydro-3-deoxyphosphooctonate aldolase (281 aa).

It belongs to the KdsA family.

Its subcellular location is the cytoplasm. It carries out the reaction D-arabinose 5-phosphate + phosphoenolpyruvate + H2O = 3-deoxy-alpha-D-manno-2-octulosonate-8-phosphate + phosphate. It functions in the pathway carbohydrate biosynthesis; 3-deoxy-D-manno-octulosonate biosynthesis; 3-deoxy-D-manno-octulosonate from D-ribulose 5-phosphate: step 2/3. The protein operates within bacterial outer membrane biogenesis; lipopolysaccharide biosynthesis. This Psychromonas ingrahamii (strain DSM 17664 / CCUG 51855 / 37) protein is 2-dehydro-3-deoxyphosphooctonate aldolase.